A 178-amino-acid polypeptide reads, in one-letter code: 2-C-methyl-D-erythritol 2,4-cyclodiphosphate synthase (178 aa).

Positions 24, 26, and 61 each coordinate a divalent metal cation. 24 to 26 (DSH) contacts 4-CDP-2-C-methyl-D-erythritol 2-phosphate. A 4-CDP-2-C-methyl-D-erythritol 2-phosphate-binding site is contributed by 150–153 (TSGE).

This sequence belongs to the IspF family. In terms of assembly, homotrimer. The cofactor is a divalent metal cation.

The enzyme catalyses 4-CDP-2-C-methyl-D-erythritol 2-phosphate = 2-C-methyl-D-erythritol 2,4-cyclic diphosphate + CMP. It participates in isoprenoid biosynthesis; isopentenyl diphosphate biosynthesis via DXP pathway; isopentenyl diphosphate from 1-deoxy-D-xylulose 5-phosphate: step 4/6. In terms of biological role, involved in the biosynthesis of isopentenyl diphosphate (IPP) and dimethylallyl diphosphate (DMAPP), two major building blocks of isoprenoid compounds. Catalyzes the conversion of 4-diphosphocytidyl-2-C-methyl-D-erythritol 2-phosphate (CDP-ME2P) to 2-C-methyl-D-erythritol 2,4-cyclodiphosphate (ME-CPP) with a corresponding release of cytidine 5-monophosphate (CMP). The polypeptide is 2-C-methyl-D-erythritol 2,4-cyclodiphosphate synthase (Chlamydia trachomatis serovar A (strain ATCC VR-571B / DSM 19440 / HAR-13)).